Consider the following 299-residue polypeptide: ATP synthase gamma chain (299 aa).

Belongs to the ATPase gamma chain family. In terms of assembly, F-type ATPases have 2 components, CF(1) - the catalytic core - and CF(0) - the membrane proton channel. CF(1) has five subunits: alpha(3), beta(3), gamma(1), delta(1), epsilon(1). CF(0) has three main subunits: a, b and c.

The protein resides in the cell membrane. Its function is as follows. Produces ATP from ADP in the presence of a proton gradient across the membrane. The gamma chain is believed to be important in regulating ATPase activity and the flow of protons through the CF(0) complex. This chain is ATP synthase gamma chain, found in Leifsonia xyli subsp. xyli (strain CTCB07).